The following is a 343-amino-acid chain: Aspartate beta-hydroxylase domain-containing protein 2 (343 aa).

Topologically, residues 1–31 (MWLEWLVAWSWSLDGLRDCIATGIQSVRDCD) are cytoplasmic. The chain crosses the membrane as a helical span at residues 32–52 (GTAVITVACLLVLFVWYCYHV). Topologically, residues 53–343 (GREQPRPHVS…ALDFIFAPGR (291 aa)) are lumenal. N-linked (GlcNAc...) asparagine glycosylation is found at Asn77 and Asn185. 2-oxoglutarate is bound by residues Trp202 and Ser246. Fe cation is bound at residue His257. 2-oxoglutarate is bound at residue 266-268 (RCH). His302 is a Fe cation binding site. 2-oxoglutarate is bound at residue Arg315.

This sequence belongs to the aspartyl/asparaginyl beta-hydroxylase family. Fe cation is required as a cofactor.

The protein localises to the membrane. May function as 2-oxoglutarate-dependent dioxygenase. The sequence is that of Aspartate beta-hydroxylase domain-containing protein 2 (Asphd2) from Rattus norvegicus (Rat).